A 911-amino-acid polypeptide reads, in one-letter code: Gem-associated protein 4a (911 aa).

In terms of assembly, component of the core survival motor neuron (SMN) complex composed of Smn, Gem2, Gem3, rig/Gem5 and one of 3 almost identical Gem4 paralogs encoded by Glos/Gem4a, Gem4b or Gem4c. Interacts with Smn; the interaction is probably indirect.

Its function is as follows. Component of the survival motor neuron (SMN) complex that catalyzes the assembly of small nuclear ribonucleoproteins (snRNPs), the building blocks of the spliceosome, and thereby plays an important role in the splicing of cellular pre-mRNAs. One of 3 almost identical paralogs (Glos/Gem4a, Gem4b and Gem4c), resulting from a genomic triplication, that have some redundant function. Required for neuromuscular function and organismal viability. The protein is Gem-associated protein 4a of Drosophila melanogaster (Fruit fly).